Reading from the N-terminus, the 239-residue chain is 2,3,4,5-tetrahydropyridine-2,6-dicarboxylate N-acetyltransferase (239 aa).

This sequence belongs to the transferase hexapeptide repeat family. DapH subfamily.

The catalysed reaction is (S)-2,3,4,5-tetrahydrodipicolinate + acetyl-CoA + H2O = L-2-acetamido-6-oxoheptanedioate + CoA. Its pathway is amino-acid biosynthesis; L-lysine biosynthesis via DAP pathway; LL-2,6-diaminopimelate from (S)-tetrahydrodipicolinate (acetylase route): step 1/3. Its function is as follows. Catalyzes the transfer of an acetyl group from acetyl-CoA to tetrahydrodipicolinate. The chain is 2,3,4,5-tetrahydropyridine-2,6-dicarboxylate N-acetyltransferase from Staphylococcus aureus (strain MRSA252).